The sequence spans 337 residues: tRNA N6-adenosine threonylcarbamoyltransferase (337 aa).

Fe cation is bound by residues H111 and H115. Residues L134–G138, D167, G180, and N272 contribute to the substrate site. D300 contacts Fe cation.

It belongs to the KAE1 / TsaD family. Fe(2+) is required as a cofactor.

It is found in the cytoplasm. It carries out the reaction L-threonylcarbamoyladenylate + adenosine(37) in tRNA = N(6)-L-threonylcarbamoyladenosine(37) in tRNA + AMP + H(+). In terms of biological role, required for the formation of a threonylcarbamoyl group on adenosine at position 37 (t(6)A37) in tRNAs that read codons beginning with adenine. Is involved in the transfer of the threonylcarbamoyl moiety of threonylcarbamoyl-AMP (TC-AMP) to the N6 group of A37, together with TsaE and TsaB. TsaD likely plays a direct catalytic role in this reaction. The polypeptide is tRNA N6-adenosine threonylcarbamoyltransferase (Aeromonas salmonicida (strain A449)).